Here is a 284-residue protein sequence, read N- to C-terminus: Formyltetrahydrofolate deformylase (284 aa).

One can recognise an ACT domain in the interval 7–90 (TLLVSCPDQP…QIHFSDQLPR (84 aa)). D228 is a catalytic residue.

Belongs to the PurU family.

The enzyme catalyses (6R)-10-formyltetrahydrofolate + H2O = (6S)-5,6,7,8-tetrahydrofolate + formate + H(+). Its pathway is purine metabolism; IMP biosynthesis via de novo pathway; formate from 10-formyl-5,6,7,8-tetrahydrofolate: step 1/1. Functionally, catalyzes the hydrolysis of 10-formyltetrahydrofolate (formyl-FH4) to formate and tetrahydrofolate (FH4). The protein is Formyltetrahydrofolate deformylase of Synechocystis sp. (strain ATCC 27184 / PCC 6803 / Kazusa).